The chain runs to 198 residues: V-type proton ATPase subunit E (198 aa).

This sequence belongs to the V-ATPase E subunit family.

Its function is as follows. Produces ATP from ADP in the presence of a proton gradient across the membrane. The sequence is that of V-type proton ATPase subunit E from Borrelia recurrentis (strain A1).